The following is a 148-amino-acid chain: uncharacterized protein (148 aa).

CBS domains are found at residues methionine 8–glutamine 68 and methionine 74–glycine 130. The segment at glutamate 127–histidine 148 is disordered. A compositionally biased stretch (basic and acidic residues) spans glycine 139 to histidine 148.

This is an uncharacterized protein from Bacillus subtilis (strain 168).